Here is a 468-residue protein sequence, read N- to C-terminus: 3-isopropylmalate dehydratase large subunit (468 aa).

[4Fe-4S] cluster-binding residues include Cys347, Cys407, and Cys410.

It belongs to the aconitase/IPM isomerase family. LeuC type 1 subfamily. In terms of assembly, heterodimer of LeuC and LeuD. [4Fe-4S] cluster is required as a cofactor.

It catalyses the reaction (2R,3S)-3-isopropylmalate = (2S)-2-isopropylmalate. It participates in amino-acid biosynthesis; L-leucine biosynthesis; L-leucine from 3-methyl-2-oxobutanoate: step 2/4. Catalyzes the isomerization between 2-isopropylmalate and 3-isopropylmalate, via the formation of 2-isopropylmaleate. The polypeptide is 3-isopropylmalate dehydratase large subunit (Prochlorococcus marinus (strain AS9601)).